The chain runs to 267 residues: Large ribosomal subunit protein uL2c (267 aa).

The protein belongs to the universal ribosomal protein uL2 family. As to quaternary structure, part of the 50S ribosomal subunit.

The protein resides in the plastid. It is found in the apicoplast. The chain is Large ribosomal subunit protein uL2c (rpl2) from Toxoplasma gondii.